A 151-amino-acid polypeptide reads, in one-letter code: FAD synthase (151 aa).

ATP contacts are provided by residues 9–10, 14–17, aspartate 96, and tyrosine 123; these read TF and HPGH.

This sequence belongs to the archaeal FAD synthase family. Homodimer. A divalent metal cation serves as cofactor.

It carries out the reaction FMN + ATP + H(+) = FAD + diphosphate. Its pathway is cofactor biosynthesis; FAD biosynthesis; FAD from FMN: step 1/1. In terms of biological role, catalyzes the transfer of the AMP portion of ATP to flavin mononucleotide (FMN) to produce flavin adenine dinucleotide (FAD) coenzyme. In Methanothermobacter thermautotrophicus (strain ATCC 29096 / DSM 1053 / JCM 10044 / NBRC 100330 / Delta H) (Methanobacterium thermoautotrophicum), this protein is FAD synthase.